The sequence spans 187 residues: Large ribosomal subunit protein eL18x (187 aa).

The tract at residues 150–187 (HFGPAPGVPHSNTKPYVRHKGRKFEKARGKRKSRGFKV) is disordered. A compositionally biased stretch (basic residues) spans 165 to 187 (YVRHKGRKFEKARGKRKSRGFKV).

The protein belongs to the eukaryotic ribosomal protein eL18 family.

This is Large ribosomal subunit protein eL18x (RPL18C) from Arabidopsis thaliana (Mouse-ear cress).